The chain runs to 516 residues: Probable serine/threonine-protein kinase DDB_G0293276 (516 aa).

The segment at 69–115 (SIEIDDENPYNTNNNNNSNNNNNNNNNNCNNSNNSNNNKNINSLDNI) is disordered. The span at 79–115 (NTNNNNNSNNNNNNNNNNCNNSNNSNNNKNINSLDNI) shows a compositional bias: low complexity. The region spanning 232 to 479 (YKHVECIGKG…SKDIKNHPYF (248 aa)) is the Protein kinase domain. Residues 238–246 (IGKGGYGVV) and K261 contribute to the ATP site. Catalysis depends on D350, which acts as the Proton acceptor.

The protein belongs to the protein kinase superfamily. AGC Ser/Thr protein kinase family.

The catalysed reaction is L-seryl-[protein] + ATP = O-phospho-L-seryl-[protein] + ADP + H(+). The enzyme catalyses L-threonyl-[protein] + ATP = O-phospho-L-threonyl-[protein] + ADP + H(+). The chain is Probable serine/threonine-protein kinase DDB_G0293276 from Dictyostelium discoideum (Social amoeba).